We begin with the raw amino-acid sequence, 336 residues long: MEEMSPDNIHGVILAVSSSIFIGSSFIIKKKGLKKAGVSGARAGEGGYGYLYEPWWWAGMITMIVGEIANFAAYAFAPAILVTPLGALSIIFSAVLAHFILEEKLHMFGILGCVLCVVGSTTIVLHAPHEQGIESVKQVWHLATEPGFLAYSAVVLVVVLALIFYYEPRYGKTHMIVYVGICSLMGSLTVMSVKAVAIAIKLTFSGMNQFKYFHAWIFIIVVTICCILQINYLNKALDNFNTAVISPVYYVMFTTFTILASMIMFKDWASQSGLQIATELCGFVTILSGTFLLHKTKDMGNSTSLRGSTSHSPRDTPVFINSGSSRSSNSTRPAIL.

Topologically, residues 1–7 are extracellular; sequence MEEMSPD. The chain crosses the membrane as a helical span at residues 8-28; the sequence is NIHGVILAVSSSIFIGSSFII. Residues 29–55 are Cytoplasmic-facing; that stretch reads KKKGLKKAGVSGARAGEGGYGYLYEPW. A helical membrane pass occupies residues 56-76; sequence WWAGMITMIVGEIANFAAYAF. Residues 77-79 lie on the Extracellular side of the membrane; the sequence is APA. Residues 80–100 form a helical membrane-spanning segment; it reads ILVTPLGALSIIFSAVLAHFI. The Cytoplasmic segment spans residues 101-104; the sequence is LEEK. The chain crosses the membrane as a helical span at residues 105–125; sequence LHMFGILGCVLCVVGSTTIVL. Topologically, residues 126–145 are extracellular; that stretch reads HAPHEQGIESVKQVWHLATE. A helical transmembrane segment spans residues 146-166; that stretch reads PGFLAYSAVVLVVVLALIFYY. At 167-179 the chain is on the cytoplasmic side; the sequence is EPRYGKTHMIVYV. Residues 180–200 form a helical membrane-spanning segment; it reads GICSLMGSLTVMSVKAVAIAI. The Extracellular portion of the chain corresponds to 201–212; the sequence is KLTFSGMNQFKY. A helical transmembrane segment spans residues 213 to 233; sequence FHAWIFIIVVTICCILQINYL. At 234 to 244 the chain is on the cytoplasmic side; the sequence is NKALDNFNTAV. Residues 245 to 265 form a helical membrane-spanning segment; sequence ISPVYYVMFTTFTILASMIMF. At 266–272 the chain is on the extracellular side; sequence KDWASQS. Residues 273 to 293 traverse the membrane as a helical segment; that stretch reads GLQIATELCGFVTILSGTFLL. Over 294–336 the chain is Cytoplasmic; that stretch reads HKTKDMGNSTSLRGSTSHSPRDTPVFINSGSSRSSNSTRPAIL. The disordered stretch occupies residues 303-336; it reads TSLRGSTSHSPRDTPVFINSGSSRSSNSTRPAIL. A compositionally biased stretch (low complexity) spans 321–330; sequence NSGSSRSSNS.

Belongs to the NIPA (TC 2.A.7) family. As to quaternary structure, homodimer.

The protein localises to the cell membrane. It is found in the early endosome. Functionally, acts as a Mg(2+) transporter. Can also transport other divalent cations such as Fe(2+), Sr(2+), Ba(2+), Mn(2+) and Co(2+) but to a much less extent than Mg(2+). The polypeptide is Probable magnesium transporter NIPA2 (Arabidopsis thaliana (Mouse-ear cress)).